The chain runs to 260 residues: Dehydrogenase/reductase SDR family member 4 (260 aa).

14–38 serves as a coordination point for NADP(+); the sequence is IVTAATKGIGLAIAERLLDEGASVV. Substrate is bound at residue Ser148. Catalysis depends on Tyr161, which acts as the Proton acceptor. Lys165 provides a ligand contact to NADP(+).

Belongs to the short-chain dehydrogenases/reductases (SDR) family.

It carries out the reaction a secondary alcohol + NADP(+) = a ketone + NADPH + H(+). Functionally, catalyzes the reduction of isatin, 4-oxonon-2-enal, 9,10-phenanthrenequinone, menadione, 2,3-hexaenadione, 3,4-hexanedione and 2,3-heptanedione. This chain is Dehydrogenase/reductase SDR family member 4, found in Caenorhabditis elegans.